Reading from the N-terminus, the 239-residue chain is Biosynthetic peptidoglycan transglycosylase (239 aa).

Residues 29–49 traverse the membrane as a helical segment; the sequence is GMFGLGALMLVWIVAYAVVPV.

It belongs to the glycosyltransferase 51 family.

The protein resides in the cell inner membrane. It catalyses the reaction [GlcNAc-(1-&gt;4)-Mur2Ac(oyl-L-Ala-gamma-D-Glu-L-Lys-D-Ala-D-Ala)](n)-di-trans,octa-cis-undecaprenyl diphosphate + beta-D-GlcNAc-(1-&gt;4)-Mur2Ac(oyl-L-Ala-gamma-D-Glu-L-Lys-D-Ala-D-Ala)-di-trans,octa-cis-undecaprenyl diphosphate = [GlcNAc-(1-&gt;4)-Mur2Ac(oyl-L-Ala-gamma-D-Glu-L-Lys-D-Ala-D-Ala)](n+1)-di-trans,octa-cis-undecaprenyl diphosphate + di-trans,octa-cis-undecaprenyl diphosphate + H(+). Its pathway is cell wall biogenesis; peptidoglycan biosynthesis. Functionally, peptidoglycan polymerase that catalyzes glycan chain elongation from lipid-linked precursors. This Jannaschia sp. (strain CCS1) protein is Biosynthetic peptidoglycan transglycosylase.